We begin with the raw amino-acid sequence, 710 residues long: Ferrioxamine receptor (710 aa).

A signal peptide spans 1 to 26 (MFSAFIIKRSAILCSLAMFIPLASIA). Positions 28-35 (DTIEVTAK) match the TonB box motif. Beta stranded transmembrane passes span 29–37 (TIEVTAKAG), 65–73 (TAQSVSVVT), 91–99 (YTPGVFTGF), 106–114 (YDTVALRGF), 137–145 (NVLQVDPWF), 152–160 (IKGPSSALY), 180–188 (SEGHFRLTA), 194–202 (QVAAFDYTD), 208–216 (WAFRLTGIT), 259–267 (GGYHSAVPA), 271–279 (IYGQKLSRG), 293–301 (WQQIYSYEF), 309–317 (WSFRQNASY), 353–361 (FAVDNQLEA), 370–378 (HKVLLGVDF), 427–435 (YEQSGVYLQ), 443–451 (WHLNLSGRY), 476–484 (GRASLLYSF), 491–499 (YVSYSQAIT), 517–525 (EQYEVGIIY), 531–539 (TSLYSAALY), 555–563 (YYVPAGKVN), 567–575 (LELEARSQI), 579–587 (LSVIAGYTY), 610–618 (NMASLWAQY), 624–632 (INVGAGIRY), 649–657 (YTLGDASVR), 671–679 (FVQLNVNNI), 684–692 (YVAACYSTS), and 702–710 (VQATVGYDF). One can recognise a TBDR plug domain in the interval 61 to 174 (PLILTAQSVS…PGGVVMMTSK (114 aa)). The 530-residue stretch at 181–710 (EGHFRLTAGN…SVQATVGYDF (530 aa)) folds into the TBDR beta-barrel domain. Residues 693–710 (YCYWGAERSVQATVGYDF) carry the TonB C-terminal box motif.

This sequence belongs to the TonB-dependent receptor family.

It localises to the cell outer membrane. Ferrioxamine binding and uptake, in association with the TonB protein. The protein is Ferrioxamine receptor (foxA) of Yersinia enterocolitica.